Reading from the N-terminus, the 498-residue chain is Angiopoietin-1 (498 aa).

Residues 1 to 15 (MTVFLSFAFLAAILT) form the signal peptide. Residues 81–119 (QKLQHLEHVMENYTQWLQKLENYIVENMKSEMAQIQQNA) adopt a coiled-coil conformation. Asn-92, Asn-122, Asn-154, Asn-243, and Asn-295 each carry an N-linked (GlcNAc...) asparagine glycan. The stretch at 153-261 (LNQTSRLEIQ…LELMDTVHNL (109 aa)) forms a coiled coil. The Fibrinogen C-terminal domain occupies 277–497 (REEEKPFRDC…STTMMIRPLD (221 aa)). 2 cysteine pairs are disulfide-bonded: Cys-286-Cys-315 and Cys-439-Cys-452.

In terms of assembly, homooligomer. Interacts with TEK/TIE2. Interacts with SVEP1/polydom. Interacts with THBD; this interaction significantly inhibits the generation of activated PC and TAFIa/CPB2 by the thrombin/thrombomodulin complex. Glycosylated.

The protein resides in the secreted. Functionally, binds and activates TEK/TIE2 receptor by inducing its dimerization and tyrosine phosphorylation. Plays an important role in the regulation of angiogenesis, endothelial cell survival, proliferation, migration, adhesion and cell spreading, reorganization of the actin cytoskeleton, but also maintenance of vascular quiescence. Required for normal angiogenesis and heart development during embryogenesis. After birth, activates or inhibits angiogenesis, depending on the context. Inhibits angiogenesis and promotes vascular stability in quiescent vessels, where endothelial cells have tight contacts. In quiescent vessels, ANGPT1 oligomers recruit TEK to cell-cell contacts, forming complexes with TEK molecules from adjoining cells, and this leads to preferential activation of phosphatidylinositol 3-kinase and the AKT1 signaling cascades. In migrating endothelial cells that lack cell-cell adhesions, ANGT1 recruits TEK to contacts with the extracellular matrix, leading to the formation of focal adhesion complexes, activation of PTK2/FAK and of the downstream kinases MAPK1/ERK2 and MAPK3/ERK1, and ultimately to the stimulation of sprouting angiogenesis. Mediates blood vessel maturation/stability. Implicated in endothelial developmental processes later and distinct from that of VEGF. Appears to play a crucial role in mediating reciprocal interactions between the endothelium and surrounding matrix and mesenchyme. This Homo sapiens (Human) protein is Angiopoietin-1 (ANGPT1).